Here is a 351-residue protein sequence, read N- to C-terminus: Fe(3+) ions import ATP-binding protein FbpC (351 aa).

The 235-residue stretch at 7–241 (LTVKNLNKFF…PNHLETAKFM (235 aa)) folds into the ABC transporter domain. Position 39 to 46 (39 to 46 (GASGCGKT)) interacts with ATP.

It belongs to the ABC transporter superfamily. Fe(3+) ion importer (TC 3.A.1.10) family. The complex is composed of two ATP-binding proteins (FbpC), two transmembrane proteins (FbpB) and a solute-binding protein (FbpA).

It is found in the cell inner membrane. It carries out the reaction Fe(3+)(out) + ATP + H2O = Fe(3+)(in) + ADP + phosphate + H(+). Part of the ABC transporter complex FbpABC involved in Fe(3+) ions import. Responsible for energy coupling to the transport system. The polypeptide is Fe(3+) ions import ATP-binding protein FbpC (Haemophilus influenzae (strain 86-028NP)).